The following is a 255-amino-acid chain: Probable transcriptional regulatory protein PCC7424_2775 (255 aa).

The protein belongs to the TACO1 family.

The protein localises to the cytoplasm. The polypeptide is Probable transcriptional regulatory protein PCC7424_2775 (Gloeothece citriformis (strain PCC 7424) (Cyanothece sp. (strain PCC 7424))).